Here is a 230-residue protein sequence, read N- to C-terminus: uncharacterized protein (230 aa).

A run of 6 helical transmembrane segments spans residues 4 to 24 (ACIA…MVKL), 30 to 50 (LPFL…LMMF), 67 to 87 (LLGP…HIIV), 91 to 111 (VPIL…GLIF), 148 to 168 (MTVV…PLFL), and 210 to 230 (MTLC…LFHI).

Belongs to the YohK (E.coli)/YwbG (IPA-22R) (B.subtilis) family.

The protein resides in the cell membrane. This is an uncharacterized protein from Bacillus subtilis (strain 168).